A 409-amino-acid polypeptide reads, in one-letter code: Glutamyl-tRNA reductase (409 aa).

Residues 46–49, Ser-88, 93–95, and Gln-99 each bind substrate; these read TCNR and ENE. Catalysis depends on Cys-47, which acts as the Nucleophile. 164 to 169 provides a ligand contact to NADP(+); the sequence is GNGMIA.

Belongs to the glutamyl-tRNA reductase family. In terms of assembly, homodimer.

The catalysed reaction is (S)-4-amino-5-oxopentanoate + tRNA(Glu) + NADP(+) = L-glutamyl-tRNA(Glu) + NADPH + H(+). Its pathway is porphyrin-containing compound metabolism; protoporphyrin-IX biosynthesis; 5-aminolevulinate from L-glutamyl-tRNA(Glu): step 1/2. Functionally, catalyzes the NADPH-dependent reduction of glutamyl-tRNA(Glu) to glutamate 1-semialdehyde (GSA). This Thermoplasma acidophilum (strain ATCC 25905 / DSM 1728 / JCM 9062 / NBRC 15155 / AMRC-C165) protein is Glutamyl-tRNA reductase.